Here is a 367-residue protein sequence, read N- to C-terminus: NADH-quinone oxidoreductase subunit D (367 aa).

Belongs to the complex I 49 kDa subunit family. In terms of assembly, NDH-1 is composed of 14 different subunits. Subunits NuoB, C, D, E, F, and G constitute the peripheral sector of the complex.

The protein resides in the cell membrane. The catalysed reaction is a quinone + NADH + 5 H(+)(in) = a quinol + NAD(+) + 4 H(+)(out). Its function is as follows. NDH-1 shuttles electrons from NADH, via FMN and iron-sulfur (Fe-S) centers, to quinones in the respiratory chain. The immediate electron acceptor for the enzyme in this species is believed to be ubiquinone. Couples the redox reaction to proton translocation (for every two electrons transferred, four hydrogen ions are translocated across the cytoplasmic membrane), and thus conserves the redox energy in a proton gradient. This Dehalococcoides mccartyi (strain ATCC BAA-2266 / KCTC 15142 / 195) (Dehalococcoides ethenogenes (strain 195)) protein is NADH-quinone oxidoreductase subunit D.